Reading from the N-terminus, the 380-residue chain is Probable tRNA sulfurtransferase (380 aa).

Residues 58–162 enclose the THUMP domain; that stretch reads EEVIERLKKV…MAFVYAGVIE (105 aa). ATP is bound by residues 178–179, 203–204, Arg260, Gly282, and Gln291; these read LL and YF.

It belongs to the ThiI family.

It is found in the cytoplasm. It carries out the reaction [ThiI sulfur-carrier protein]-S-sulfanyl-L-cysteine + a uridine in tRNA + 2 reduced [2Fe-2S]-[ferredoxin] + ATP + H(+) = [ThiI sulfur-carrier protein]-L-cysteine + a 4-thiouridine in tRNA + 2 oxidized [2Fe-2S]-[ferredoxin] + AMP + diphosphate. The enzyme catalyses [ThiS sulfur-carrier protein]-C-terminal Gly-Gly-AMP + S-sulfanyl-L-cysteinyl-[cysteine desulfurase] + AH2 = [ThiS sulfur-carrier protein]-C-terminal-Gly-aminoethanethioate + L-cysteinyl-[cysteine desulfurase] + A + AMP + 2 H(+). It functions in the pathway cofactor biosynthesis; thiamine diphosphate biosynthesis. Functionally, catalyzes the ATP-dependent transfer of a sulfur to tRNA to produce 4-thiouridine in position 8 of tRNAs, which functions as a near-UV photosensor. Also catalyzes the transfer of sulfur to the sulfur carrier protein ThiS, forming ThiS-thiocarboxylate. This is a step in the synthesis of thiazole, in the thiamine biosynthesis pathway. The sulfur is donated as persulfide by IscS. This chain is Probable tRNA sulfurtransferase, found in Thermoanaerobacter pseudethanolicus (strain ATCC 33223 / 39E) (Clostridium thermohydrosulfuricum).